We begin with the raw amino-acid sequence, 163 residues long: Myosin light chain 2 (163 aa).

EF-hand domains lie at 15 to 50 and 92 to 127; these read DYIN…LGKT and PERE…AGFE. Ca(2+) contacts are provided by D28, D30, D32, and D39.

As to quaternary structure, interacts with the IQ domain of MYO1.

The protein resides in the bud neck. In terms of biological role, regulatory light chain for the class II conventional myosin MYO1. May play a role in the disassembly of the MYO1 ring at the bud neck at the end of its contraction during cytokinesis. This Saccharomyces cerevisiae (strain ATCC 204508 / S288c) (Baker's yeast) protein is Myosin light chain 2 (MLC2).